Here is a 320-residue protein sequence, read N- to C-terminus: ATP-dependent 6-phosphofructokinase (320 aa).

Gly12 is an ATP binding site. ADP contacts are provided by residues 22-26 (RSVVR) and 55-60 (RYSVSD). ATP is bound by residues 73-74 (RF) and 103-106 (GDGS). Asp104 contacts Mg(2+). 126 to 128 (TID) is a binding site for substrate. Asp128 serves as the catalytic Proton acceptor. Arg155 is a binding site for ADP. Residues Arg163 and 170-172 (MGR) each bind substrate. Residues 186–188 (GCE) and 214–216 (KKH) contribute to the ADP site. Residues Glu223, Arg244, and 250 to 253 (HIQR) each bind substrate.

Belongs to the phosphofructokinase type A (PFKA) family. ATP-dependent PFK group I subfamily. Prokaryotic clade 'B1' sub-subfamily. As to quaternary structure, homotetramer. Mg(2+) is required as a cofactor.

The protein localises to the cytoplasm. The catalysed reaction is beta-D-fructose 6-phosphate + ATP = beta-D-fructose 1,6-bisphosphate + ADP + H(+). It functions in the pathway carbohydrate degradation; glycolysis; D-glyceraldehyde 3-phosphate and glycerone phosphate from D-glucose: step 3/4. With respect to regulation, allosterically activated by ADP and other diphosphonucleosides, and allosterically inhibited by phosphoenolpyruvate. Its function is as follows. Catalyzes the phosphorylation of D-fructose 6-phosphate to fructose 1,6-bisphosphate by ATP, the first committing step of glycolysis. In Baumannia cicadellinicola subsp. Homalodisca coagulata, this protein is ATP-dependent 6-phosphofructokinase.